Here is a 790-residue protein sequence, read N- to C-terminus: Probable phosphoketolase (790 aa).

The protein belongs to the XFP family. Thiamine diphosphate serves as cofactor.

This Nitrosomonas europaea (strain ATCC 19718 / CIP 103999 / KCTC 2705 / NBRC 14298) protein is Probable phosphoketolase.